The following is a 217-amino-acid chain: Uracil-DNA glycosylase (217 aa).

The active-site Proton acceptor is aspartate 62.

This sequence belongs to the uracil-DNA glycosylase (UDG) superfamily. UNG family.

The protein resides in the cytoplasm. The catalysed reaction is Hydrolyzes single-stranded DNA or mismatched double-stranded DNA and polynucleotides, releasing free uracil.. Functionally, excises uracil residues from the DNA which can arise as a result of misincorporation of dUMP residues by DNA polymerase or due to deamination of cytosine. The chain is Uracil-DNA glycosylase from Streptococcus pneumoniae (strain Hungary19A-6).